The primary structure comprises 486 residues: MTDTATAPVASDSVAGVGRIVRVTGPVVDIEFPHDSIPPVYNALKTTITIGEESTEITLEIALHLGDDVVRAIALKPTDGLVRGQEVRDTGAAISVPVGDITKGKVFNVTGDILNNEGGEPIEITERWPIHRKPPMFDQLESKTQLFETGIKVIDLLTPYVQGGKIGLFGGAGVGKTVLIQEMIQRVAQDHGGVSVFAGVGERTREGNDLIMEMEEAGVFDKTALVFGQMDEPPGTRLRVALSALTMAEYFRDVKNQDVLLFIDNIFRFTQAGSEVSTLLGRMPSAVGYQPNLADEMGVLQERITSTRGHSITSLQAIYVPADDYTDPAPATTFAHLDATTELSREIASRGLYPAVDPLTSTSRILDPRYLGQAHYDTATRVKAILQKNKELQEIIAILGVDELSEEDKVTVSRARRIQQFLSQNTYMAKKFTGVEGSTVPLKNTIESFSKIADGDYDHVAEQAFFNVGDLDDVERRWSEIQKENG.

Gly170–Thr177 contributes to the ATP binding site.

The protein belongs to the ATPase alpha/beta chains family. F-type ATPases have 2 components, CF(1) - the catalytic core - and CF(0) - the membrane proton channel. CF(1) has five subunits: alpha(3), beta(3), gamma(1), delta(1), epsilon(1). CF(0) has three main subunits: a(1), b(2) and c(9-12). The alpha and beta chains form an alternating ring which encloses part of the gamma chain. CF(1) is attached to CF(0) by a central stalk formed by the gamma and epsilon chains, while a peripheral stalk is formed by the delta and b chains.

It is found in the cell membrane. The enzyme catalyses ATP + H2O + 4 H(+)(in) = ADP + phosphate + 5 H(+)(out). Its function is as follows. Produces ATP from ADP in the presence of a proton gradient across the membrane. The catalytic sites are hosted primarily by the beta subunits. The protein is ATP synthase subunit beta of Clavibacter michiganensis subsp. michiganensis (strain NCPPB 382).